Consider the following 518-residue polypeptide: Arrestin-related trafficking adapter 10 (518 aa).

K118 participates in a covalent cross-link: Glycyl lysine isopeptide (Lys-Gly) (interchain with G-Cter in ubiquitin).

This sequence belongs to the ART10 family. As to quaternary structure, interacts with RSP5. Ubiquitinated by RSP5.

It localises to the cytoplasm. May regulate endocytosis by recruiting RSP5 ubiquitin ligase activity to specific plasma membrane proteins in response to extracellular stimuli. This is Arrestin-related trafficking adapter 10 (ART10) from Saccharomyces cerevisiae (strain ATCC 204508 / S288c) (Baker's yeast).